A 395-amino-acid chain; its full sequence is 1-deoxy-D-xylulose 5-phosphate reductoisomerase (395 aa).

The NADPH site is built by threonine 10, glycine 11, serine 12, isoleucine 13, lysine 37, and asparagine 123. Lysine 124 is a binding site for 1-deoxy-D-xylulose 5-phosphate. Glutamate 125 serves as a coordination point for NADPH. Residue aspartate 149 participates in Mn(2+) binding. Residues serine 150, glutamate 151, serine 185, and histidine 208 each coordinate 1-deoxy-D-xylulose 5-phosphate. Residue glutamate 151 participates in Mn(2+) binding. An NADPH-binding site is contributed by glycine 214. 4 residues coordinate 1-deoxy-D-xylulose 5-phosphate: serine 221, asparagine 226, lysine 227, and glutamate 230. Residue glutamate 230 participates in Mn(2+) binding.

It belongs to the DXR family. Requires Mg(2+) as cofactor. It depends on Mn(2+) as a cofactor.

It catalyses the reaction 2-C-methyl-D-erythritol 4-phosphate + NADP(+) = 1-deoxy-D-xylulose 5-phosphate + NADPH + H(+). The protein operates within isoprenoid biosynthesis; isopentenyl diphosphate biosynthesis via DXP pathway; isopentenyl diphosphate from 1-deoxy-D-xylulose 5-phosphate: step 1/6. In terms of biological role, catalyzes the NADPH-dependent rearrangement and reduction of 1-deoxy-D-xylulose-5-phosphate (DXP) to 2-C-methyl-D-erythritol 4-phosphate (MEP). This chain is 1-deoxy-D-xylulose 5-phosphate reductoisomerase, found in Shewanella loihica (strain ATCC BAA-1088 / PV-4).